Here is a 161-residue protein sequence, read N- to C-terminus: Nucleotide-binding protein XOO0647 (161 aa).

Belongs to the YajQ family.

Its function is as follows. Nucleotide-binding protein. The polypeptide is Nucleotide-binding protein XOO0647 (Xanthomonas oryzae pv. oryzae (strain MAFF 311018)).